A 195-amino-acid polypeptide reads, in one-letter code: MKSLKGTKTAENLMKSFAGECQARTRYTYFSSTARKEGYVQISNIFLETAENEKEHAKRFYKFLKDDLQGEAVEINAAYPVELPTDTLTNLKFAAEGEHDELSNLYPSFADVADEEGFPEVAAAFRMIAKAETAHYNRFMKLAKNIEEGKVFKKDEVVLWKCGNCGFIWEGAEAPLKCPACLHPQAYFEVFKETY.

The region spanning 1–150 (MKSLKGTKTA…KLAKNIEEGK (150 aa)) is the Ferritin-like diiron domain. Fe(3+) is bound by residues glutamate 20, glutamate 53, glutamate 98, glutamate 101, glutamate 132, histidine 135, cysteine 162, cysteine 165, cysteine 178, and cysteine 181. Positions 157–195 (VVLWKCGNCGFIWEGAEAPLKCPACLHPQAYFEVFKETY) constitute a Rubredoxin-like domain.

In terms of assembly, homodimer. Possesses two rubredoxin-like centers and two non-sulfur oxo-bridged di-iron centers per dimer. The cofactor is Fe(3+).

It is found in the cytoplasm. In terms of biological role, may provide oxidative stress protection via catalytic reduction of intracellular hydrogen peroxide. This chain is Rubrerythrin (rbr), found in Clostridium perfringens (strain 13 / Type A).